A 701-amino-acid polypeptide reads, in one-letter code: Serologically defined colon cancer antigen 8 homolog (701 aa).

The span at 1–13 (MKPSLESDEEEEL) shows a compositional bias: acidic residues. 2 disordered regions span residues 1-67 (MKPS…VQQS) and 84-114 (ANIQSLSPSRRKLAAKRATDDGSSSQPGVHN). Residues 45-67 (SEPNQQELLSSVQQNPCSPVQQS) are compositionally biased toward polar residues. Coiled-coil stretches lie at residues 119–173 (INNQ…LKEY), 203–258 (HKWR…AVAA), and 323–695 (QQVK…AGKR). The tract at residues 364-387 (LASEQDKISQAREAARSESKKERE) is disordered.

The protein localises to the cytoplasm. The protein resides in the cytoskeleton. Its subcellular location is the microtubule organizing center. It is found in the centrosome. It localises to the centriole. The protein localises to the cilium basal body. The protein resides in the cell junction. Functionally, plays a role in the establishment of cell polarity and epithelial lumen formation. Also plays an essential role in ciliogenesis and subsequent Hedgehog signaling pathway that requires the presence of intact primary cilia for pathway activation. Mechanistically, interacts with and mediates RABEP2 centrosomal localization which is critical for ciliogenesis. In Danio rerio (Zebrafish), this protein is Serologically defined colon cancer antigen 8 homolog (Sdccag8).